The following is a 558-amino-acid chain: Putative cation/proton antiporter YbaL (558 aa).

Topologically, residues 1-3 are periplasmic; that stretch reads MHH. A helical transmembrane segment spans residues 4-24; that stretch reads ATPLITTIVGGLVLAFILGML. Topologically, residues 25-31 are cytoplasmic; it reads ANKLRIS. A helical transmembrane segment spans residues 32 to 52; the sequence is PLVGYLLAGVLAGPFTPGFVA. Residues 53–55 lie on the Periplasmic side of the membrane; it reads DTK. A helical membrane pass occupies residues 56-76; it reads LAPELAELGVILLMFGVGLHF. The Cytoplasmic segment spans residues 77–85; it reads SLKDLMAVK. A helical membrane pass occupies residues 86–106; that stretch reads AIAIPGAIAQIAVATLLGMAL. Topologically, residues 107–112 are periplasmic; sequence SAVLGW. A helical membrane pass occupies residues 113–133; it reads SLMTGIVFGLCLSTASTVVLL. Residues 134–148 lie on the Cytoplasmic side of the membrane; that stretch reads RALEERQLIDSQRGQ. A helical transmembrane segment spans residues 149–169; it reads IAIGWLIVEDLVMVLTLVLLP. Residues 170-185 lie on the Periplasmic side of the membrane; it reads AVAGMMEQGDVGFATL. The chain crosses the membrane as a helical span at residues 186–206; that stretch reads AVDMGITIGKVIAFIAIMMLV. The Cytoplasmic portion of the chain corresponds to 207-225; it reads GRRLVPWIMARSAATGSRE. Residues 226–246 traverse the membrane as a helical segment; the sequence is LFTLSVLALALGVAFGAVELF. Position 247 (Asp247) is a topological domain, periplasmic. A helical transmembrane segment spans residues 248-268; it reads VSFALGAFFAGMVLNESELSH. At 269-279 the chain is on the cytoplasmic side; that stretch reads RAAHDTLPLRD. Residues 280–300 traverse the membrane as a helical segment; sequence AFAVLFFVSVGMLFDPLILIQ. Topologically, residues 301–303 are periplasmic; the sequence is QPL. A helical transmembrane segment spans residues 304–324; sequence AVLATLAIILFGKSLAAFFLV. Residues 325-336 lie on the Cytoplasmic side of the membrane; the sequence is RLFGHSQRTALT. A helical transmembrane segment spans residues 337-357; it reads IAASLAQIGEFAFILAGLGMA. Topologically, residues 358-367 are periplasmic; the sequence is LNLLPQAGQN. A helical membrane pass occupies residues 368-388; it reads LVLAGAILSIMLNPVLFALLE. The Cytoplasmic segment spans residues 389 to 558; it reads KYLAKTETLE…TPPAGEVVTG (170 aa). The 118-residue stretch at 417–534 folds into the RCK N-terminal domain; that stretch reads CNHALLVGYG…TERGANQVVM (118 aa). AMP-binding positions include 427-428, 447-448, 467-468, Glu494, and Arg514; these read RV, ET, and NA.

This sequence belongs to the monovalent cation:proton antiporter 2 (CPA2) transporter (TC 2.A.37) family.

It localises to the cell inner membrane. This chain is Putative cation/proton antiporter YbaL (ybaL), found in Escherichia coli (strain K12).